A 243-amino-acid chain; its full sequence is Cell surface glycoprotein CD200 receptor 1-B (243 aa).

Over 1 to 29 the chain is Cytoplasmic; it reads MEISQQAGWCKKPASPMNTRAALEAVRNT. A helical; Signal-anchor for type II membrane protein membrane pass occupies residues 30–47; that stretch reads AWTIVLLTSAAVMGASGI. The Ig-like V-type domain occupies 47-146; that stretch reads ISRVSANLGH…GNFHYLYHLT (100 aa). The Lumenal segment spans residues 48 to 243; it reads SRVSANLGHS…LAQLPGGSAP (196 aa). 2 cysteine pairs are disulfide-bonded: cysteine 62–cysteine 130 and cysteine 165–cysteine 214. N-linked (GlcNAc...) asparagine glycans are attached at residues asparagine 64, asparagine 67, asparagine 127, asparagine 193, asparagine 222, and asparagine 228. The region spanning 144 to 228 is the Ig-like C2-type domain; it reads HLTVLVAPRM…ATLNETRSIN (85 aa).

Belongs to the CD200R family. As to expression, expressed in peripheral blood lymphocytes (PBL) and peripheral blood mononuclear cells (PBMC).

It localises to the membrane. The chain is Cell surface glycoprotein CD200 receptor 1-B (CD200R1B) from Gallus gallus (Chicken).